Consider the following 542-residue polypeptide: Mitogen-activated protein kinase 14 (542 aa).

The Protein kinase domain maps to 13–304 (YKIEEVIGKG…AEEALADPYF (292 aa)). ATP is bound by residues 19-27 (IGKGSYGVV) and Lys-42. Asp-139 acts as the Proton acceptor in catalysis. Residue Thr-175 is modified to Phosphothreonine. The TXY motif lies at 175–177 (TDY). Tyr-177 carries the phosphotyrosine modification. Disordered stretches follow at residues 388 to 412 (STAA…DNRP) and 482 to 542 (RNPA…SGHW). Residues 488–507 (PNSSVPLGSSYPRRNQTCKS) are compositionally biased toward polar residues.

It belongs to the protein kinase superfamily. CMGC Ser/Thr protein kinase family. MAP kinase subfamily. In terms of processing, dually phosphorylated on Thr-175 and Tyr-177, which activates the enzyme.

The enzyme catalyses L-seryl-[protein] + ATP = O-phospho-L-seryl-[protein] + ADP + H(+). It carries out the reaction L-threonyl-[protein] + ATP = O-phospho-L-threonyl-[protein] + ADP + H(+). With respect to regulation, activated by threonine and tyrosine phosphorylation. The protein is Mitogen-activated protein kinase 14 (MPK14) of Oryza sativa subsp. japonica (Rice).